A 435-amino-acid polypeptide reads, in one-letter code: Large ribosomal subunit protein mL65 (435 aa).

The protein belongs to the mitochondrion-specific ribosomal protein mL65 family. In terms of assembly, component of the mitochondrial ribosome small subunit (28S) which comprises a 12S rRNA and about 30 distinct proteins.

Its subcellular location is the mitochondrion. This Bos taurus (Bovine) protein is Large ribosomal subunit protein mL65 (MRPS30).